The chain runs to 1247 residues: Catenin delta-2 (1247 aa).

3 disordered regions span residues 1-50 (MFAR…TTSA), 134-238 (SGIL…SAFH), and 256-309 (LPAP…KSYS). Ser7 is modified (phosphoserine). Positions 22–50 (PSASEKNSSLSPGLNTSNGDGSETETTSA) are enriched in polar residues. A coiled-coil region spans residues 49 to 84 (SAILASVKEQELQFERLTRELEAERQIVASQLERCK). Over residues 149-160 (SLLSQSALQLNS) the composition is skewed to low complexity. Positions 172–207 (YHSNQTLALGDTAPSQLPARSTQARAAGQSFSQGTT) are enriched in polar residues. Position 209 is an omega-N-methylarginine (Arg209). Pro residues predominate over residues 218 to 228 (PAPPPPPPREP). Arg261 carries the omega-N-methylarginine modification. Ser264 and Ser273 each carry phosphoserine. The span at 265–276 (PLTTTQGGSPTK) shows a compositional bias: polar residues. Residues Arg279 and Arg293 each carry the omega-N-methylarginine modification. The segment covering 296–309 (SPKQSPSRLAKSYS) has biased composition (polar residues). A phosphoserine mark is found at Ser324, Ser357, Ser412, and Ser458. An ARM 1 repeat occupies 391-433 (GSRASYSSQHGHLAPELRALQSPEHHIDPIYEDRVYQKPPMRS). A disordered region spans residues 429-480 (PPMRSLSQSQGDPLPPAHTGTFRTSTAPSSPGVDSVPLQRTGSQHGPQNAAA). Positions 466–475 (LQRTGSQHGP) are enriched in polar residues. Residue Ser511 is modified to Phosphoserine. Tyr513 carries the post-translational modification Phosphotyrosine. The segment at 514–533 (SKSGPALPPEGTLARSPSID) is disordered. 8 ARM repeats span residues 537 to 576 (KDPR…HLCF), 579 to 618 (NKIK…NLVY), 623 to 663 (DDNK…NLSS), 679 to 721 (LTNA…NVSS), 725 to 770 (EARR…NLSY), 832 to 872 (PKGI…NLAA), 904 to 943 (VYIR…NMAL), and 997 to 1040 (MENA…SMWQ). Disordered regions lie at residues 1064–1131 (TIER…HTSR) and 1152–1176 (APAE…RKDY). Over residues 1072 to 1081 (PYSSSRTPSI) the composition is skewed to polar residues. Ser1087 and Ser1098 each carry phosphoserine. The span at 1087-1100 (SPNNRSASAPASPR) shows a compositional bias: low complexity. Residues 1103 to 1112 (ISLKERKTDY) show a composition bias toward basic and acidic residues.

The protein belongs to the beta-catenin family. Binds to E-cadherin at a juxtamembrane site within the cytoplasmic domain. Binds to PSEN1. Interacts with PDZD2. Interacts (via the extreme C-terminus) with FRMPD2 (via the PDZ 2 domain). Interacts with ZBTB33. Interacts with ARHGEF28. Interacts with CDK5. Interacts with CTNNB1. Interacts with GSK3A and GSK3B. Interacts with DNM2. Interacts with CCDC85B. O-glycosylated. In terms of processing, phosphorylated by CDK5. Phosphorylated by GSK3B. In terms of tissue distribution, expressed in neurons and glial cells. Isoform 2 was found to be the most predominant isoform in various brain regions. Expressed at neuromuscular junctions.

The protein localises to the nucleus. It localises to the cell junction. The protein resides in the adherens junction. Its subcellular location is the cell projection. It is found in the dendrite. The protein localises to the perikaryon. Its function is as follows. Has a critical role in neuronal development, particularly in the formation and/or maintenance of dendritic spines and synapses. Involved in the regulation of canonical Wnt signaling. It probably acts on beta-catenin turnover, facilitating beta-catenin interaction with GSK3B, phosphorylation, ubiquitination and degradation. May be involved in neuronal cell adhesion and tissue morphogenesis and integrity by regulating adhesion molecules. Functions as a transcriptional activator when bound to ZBTB33. The polypeptide is Catenin delta-2 (Ctnnd2) (Mus musculus (Mouse)).